Reading from the N-terminus, the 890-residue chain is Exo-beta-D-glucosaminidase (890 aa).

The first 18 residues, 1-18, serve as a signal peptide directing secretion; it reads MIAKAVAALLLGSGLASA. The propeptide occupies 19–26; that stretch reads AGTPLTSK. Residues asparagine 194, asparagine 334, and asparagine 438 are each glycosylated (N-linked (GlcNAc...) asparagine). Aspartate 462 acts as the Proton donor in catalysis. Glutamate 537 serves as the catalytic Nucleophile. 2 N-linked (GlcNAc...) asparagine glycosylation sites follow: asparagine 576 and asparagine 687.

The protein belongs to the glycosyl hydrolase 2 family. In terms of assembly, monomer.

Its subcellular location is the secreted. It localises to the extracellular space. The enzyme catalyses Hydrolysis of chitosan or chitosan oligosaccharides to remove successive D-glucosamine residues from the non-reducing termini.. Functionally, hydrolyzes chitosan and chitooligosaccharides with retention of anomeric configuration. Has no activity against beta-D-galactoside, beta-D-glucuronide, beta-D-mannoside, chitin, glycol chitosan, cellulose, N,N'-diacetylchitibiose and pNP-GlcNAc. The chain is Exo-beta-D-glucosaminidase from Hypocrea virens (Gliocladium virens).